Reading from the N-terminus, the 169-residue chain is Lipoprotein signal peptidase (169 aa).

The next 4 membrane-spanning stretches (helical) occupy residues 4-24, 29-49, 70-90, and 101-121; these read PICS…ILDI, WVMA…FNLT, WFFA…MYRS, and YALI…HGAV. Catalysis depends on residues Asp-123 and Asp-141. Residues 137-157 form a helical membrane-spanning segment; sequence FNLADVAISIGAVLVIFEGFL.

It belongs to the peptidase A8 family.

The protein resides in the cell inner membrane. It carries out the reaction Release of signal peptides from bacterial membrane prolipoproteins. Hydrolyzes -Xaa-Yaa-Zaa-|-(S,diacylglyceryl)Cys-, in which Xaa is hydrophobic (preferably Leu), and Yaa (Ala or Ser) and Zaa (Gly or Ala) have small, neutral side chains.. It functions in the pathway protein modification; lipoprotein biosynthesis (signal peptide cleavage). Its function is as follows. This protein specifically catalyzes the removal of signal peptides from prolipoproteins. The chain is Lipoprotein signal peptidase from Yersinia pseudotuberculosis serotype O:1b (strain IP 31758).